A 67-amino-acid chain; its full sequence is Protein AaeX (67 aa).

2 consecutive transmembrane segments (helical) span residues leucine 3 to leucine 23 and proline 47 to valine 67.

The protein belongs to the AaeX family.

It is found in the cell membrane. This Escherichia coli O157:H7 protein is Protein AaeX.